A 60-amino-acid polypeptide reads, in one-letter code: Truncated protein A35 homolog (60 aa).

It belongs to the chordopoxvirinae A35 protein family.

This is Truncated protein A35 homolog (A38R) from Variola virus (isolate Human/India/Ind3/1967) (VARV).